The primary structure comprises 253 residues: Probable U2 small nuclear ribonucleoprotein A' (253 aa).

4 LRR repeats span residues 20-41 (NMREINLRGQKIPVIENMGVTR), 43-64 (QFDVIDLTDNDIRKLDNFPTFS), 65-86 (RLNTLYLHNNRINYIAPDIATK), and 89-110 (NLKTLALTNNNICELGDIEPLA). Positions 123–161 (NPITHKDNYRMYMIYKLPTVRVIDFNRVRLTEREAAKKM) constitute an LRRCT domain. 2 disordered regions span residues 163-205 (KGKS…EDRE) and 232-253 (VPEKGWNRQMDQNGADGEAMES). The span at 169 to 182 (KARDAIQKSVHTED) shows a compositional bias: basic and acidic residues.

This sequence belongs to the U2 small nuclear ribonucleoprotein A family. In terms of assembly, interacts with rnp-3.

It is found in the nucleus. In terms of biological role, this protein is associated with sn-RNP U2. It helps the A' protein to bind stem loop IV of U2 snRNA. Required maternally for early embryonic development and zygotically for germline and somatic development. Has a role in the switch from mitosis to meiosis. Might function in alternative splicing. This Caenorhabditis elegans protein is Probable U2 small nuclear ribonucleoprotein A' (mog-2).